A 479-amino-acid chain; its full sequence is Putative L-cysteine desulfhydrase 2 (479 aa).

A disordered region spans residues 1 to 36 (MASLQSGGDAAANGVDADVDGAASPPSAKRPRAGAG). Residues 7-36 (GGDAAANGVDADVDGAASPPSAKRPRAGAG) show a composition bias toward low complexity. Lys270 is modified (N6-(pyridoxal phosphate)lysine).

This sequence belongs to the class-V pyridoxal-phosphate-dependent aminotransferase family. Requires pyridoxal 5'-phosphate as cofactor.

It carries out the reaction L-cysteine + H2O = hydrogen sulfide + pyruvate + NH4(+) + H(+). Its function is as follows. Catalyzes the production of hydrogen sulfide (H2S) from cysteine. The chain is Putative L-cysteine desulfhydrase 2 from Oryza sativa subsp. japonica (Rice).